A 649-amino-acid chain; its full sequence is Stress-70 protein, mitochondrial (649 aa).

Residues 1–46 (MISASRAAAARLVGAAASRGPTAARHKDGWNGLSHEAFRIVSRRDY) constitute a mitochondrion transit peptide. The segment at 1 to 432 (MISASRAAAA…IQGGVLAGDV (432 aa)) is interaction with NFS1. Residues T63 and N64 each contribute to the ADP site. Residues 63 to 431 (TNSCVAVMEG…AIQGGVLAGD (369 aa)) form a nucleotide-binding domain (NBD) region. Position 76 is an N6-acetyllysine (K76). T87 is subject to Phosphothreonine. Residues K135 and K138 each carry the N6-acetyllysine; alternate modification. Residues K135 and K138 each carry the N6-succinyllysine; alternate modification. K143 is subject to N6-acetyllysine. N6-acetyllysine; alternate is present on K206. K206 bears the N6-succinyllysine; alternate mark. The residue at position 206 (K206) is an N6-malonyllysine; alternate. An N6-acetyllysine mark is found at K234 and K288. K300 is subject to N6-acetyllysine; alternate. K300 bears the N6-succinyllysine; alternate mark. Positions 313, 316, and 320 each coordinate ADP. N6-succinyllysine is present on K368. Residues G388 and R391 each coordinate ADP. The residue at position 394 (K394) is an N6-succinyllysine. At S408 the chain carries Phosphoserine. An interdomain linker region spans residues 432-441 (VTDVLLLDVT). 3 positions are modified to N6-acetyllysine; alternate: K565, K598, and K638. An N6-succinyllysine; alternate mark is found at K565, K598, and K638.

Belongs to the heat shock protein 70 family. In terms of assembly, interacts strongly with the intermediate form of FXN and weakly with its mature form. Interacts with HSCB. Associates with the mitochondrial contact site and cristae organizing system (MICOS) complex, composed of at least MICOS10/MIC10, CHCHD3/MIC19, CHCHD6/MIC25, APOOL/MIC27, IMMT/MIC60, APOO/MIC23/MIC26 and QIL1/MIC13. This complex was also known under the names MINOS or MitOS complex. The MICOS complex associates with mitochondrial outer membrane proteins SAMM50, MTX1, MTX2 and DNAJC11, mitochondrial inner membrane protein TMEM11 and with HSPA9. Interacts with DNLZ, the interaction is required to prevent self-aggregation. Interacts with TESPA1. Interacts with PDPN. Interacts with NFU1, NFS1 and ISCU. Interacts with TP53; the interaction promotes TP53 degradation. Interacts (via SBD domain) with UBXN2A; the interaction with UBXN2A inhibits HSPA9/MOT-2 interaction with and degradation of TP53, thereby promotes TP53 translocation to the nucleus. Interacts with ITPR1 AND VDAC1; this interaction couples ITPR1 to VDAC1. Component of the TIM23 mitochondrial inner membrane pre-sequence translocase complex.

It localises to the mitochondrion. The protein resides in the nucleus. Its subcellular location is the nucleolus. It is found in the cytoplasm. The protein localises to the mitochondrion matrix. It catalyses the reaction ATP + H2O = ADP + phosphate + H(+). With respect to regulation, the chaperone activity is regulated by ATP-induced allosteric coupling of the nucleotide-binding (NBD) and substrate-binding (SBD) domains. ATP binding in the NBD leads to a conformational change in the NBD, which is transferred through the interdomain linker (IDL) to the substrate-binding domain (SBD). This elicits a reduced substrate affinity and a faster substrate exchange rate. Upon hydrolysis of ATP to ADP, the protein undergoes a conformational change that increases its affinity for substrate proteins. It cycles through repeated phases of ATP hydrolysis and nucleotide exchange, facilitating repeated cycles of substrate binding and release. Functions in collaboration with co-chaperones. Functions with the co-chaperone, DNLZ, to maintain solubility and regulate ATP hydrolysis. Nucleotide exchange factors, GRPEL1 and GRPEL2, accelerate nucleotide exchange. Mitochondrial chaperone that plays a key role in mitochondrial protein import, folding, and assembly. Plays an essential role in the protein quality control system, the correct folding of proteins, the re-folding of misfolded proteins, and the targeting of proteins for subsequent degradation. These processes are achieved through cycles of ATP binding, ATP hydrolysis, and ADP release, mediated by co-chaperones. In mitochondria, it associates with the TIM (translocase of the inner membrane) protein complex to assist in the import and folding of mitochondrial proteins. Plays an important role in mitochondrial iron-sulfur cluster (ISC) biogenesis, interacts with and stabilizes ISC cluster assembly proteins FXN, NFU1, NFS1 and ISCU. Regulates erythropoiesis via stabilization of ISC assembly. Regulates mitochondrial calcium-dependent apoptosis by coupling two calcium channels, ITPR1 and VDAC1, at the mitochondria-associated endoplasmic reticulum (ER) membrane to facilitate calcium transport from the ER lumen to the mitochondria intermembrane space, providing calcium for the downstream calcium channel MCU, which releases it into the mitochondrial matrix. Although primarily located in the mitochondria, it is also found in other cellular compartments. In the cytosol, it associates with proteins involved in signaling, apoptosis, or senescence. It may play a role in cell cycle regulation via its interaction with and promotion of degradation of TP53. May play a role in the control of cell proliferation and cellular aging. Protects against reactive oxygen species (ROS). Extracellular HSPA9 plays a cytoprotective role by preventing cell lysis following immune attack by the membrane attack complex by disrupting formation of the complex. In Canis lupus familiaris (Dog), this protein is Stress-70 protein, mitochondrial.